Reading from the N-terminus, the 420-residue chain is tRNA(Ile)-lysidine synthase, chloroplastic (420 aa).

63 to 68 provides a ligand contact to ATP; sequence SGGQDS.

Belongs to the tRNA(Ile)-lysidine synthase family.

It is found in the plastid. It localises to the chloroplast. The catalysed reaction is cytidine(34) in tRNA(Ile2) + L-lysine + ATP = lysidine(34) in tRNA(Ile2) + AMP + diphosphate + H(+). Its function is as follows. Ligates lysine onto the cytidine present at position 34 of the AUA codon-specific tRNA(Ile) that contains the anticodon CAU, in an ATP-dependent manner. Cytidine is converted to lysidine, thus changing the amino acid specificity of the tRNA from methionine to isoleucine. The protein is tRNA(Ile)-lysidine synthase, chloroplastic of Zygnema circumcarinatum (Green alga).